We begin with the raw amino-acid sequence, 115 residues long: MRVGCDIIAISRIEKIHSRHGKNFLDKFLNPKEQILIKNPATLAGLWAAKEAASKALGVGICELCSFFDIEISKDEKNAPKLKYSQKITKDFNITQTSLSISHDNGFAIAIVAVV.

Residues Asp6 and Glu51 each contribute to the Mg(2+) site.

Belongs to the P-Pant transferase superfamily. AcpS family. Requires Mg(2+) as cofactor.

It is found in the cytoplasm. The catalysed reaction is apo-[ACP] + CoA = holo-[ACP] + adenosine 3',5'-bisphosphate + H(+). Its function is as follows. Transfers the 4'-phosphopantetheine moiety from coenzyme A to a Ser of acyl-carrier-protein. The sequence is that of Holo-[acyl-carrier-protein] synthase from Campylobacter jejuni subsp. jejuni serotype O:2 (strain ATCC 700819 / NCTC 11168).